The chain runs to 156 residues: Small ribosomal subunit protein uS7 (156 aa).

The protein belongs to the universal ribosomal protein uS7 family. In terms of assembly, part of the 30S ribosomal subunit. Contacts proteins S9 and S11.

One of the primary rRNA binding proteins, it binds directly to 16S rRNA where it nucleates assembly of the head domain of the 30S subunit. Is located at the subunit interface close to the decoding center, probably blocks exit of the E-site tRNA. This is Small ribosomal subunit protein uS7 from Campylobacter concisus (strain 13826).